The following is a 164-amino-acid chain: Low molecular weight phosphotyrosine protein phosphatase 2 (164 aa).

Cys14 functions as the Nucleophile in the catalytic mechanism. Arg20 is an active-site residue. Asp130 acts as the Proton donor in catalysis.

This sequence belongs to the low molecular weight phosphotyrosine protein phosphatase family. In terms of tissue distribution, cone cells and primary pigment cells in developing pupal retina.

It localises to the cytoplasm. It catalyses the reaction O-phospho-L-tyrosyl-[protein] + H2O = L-tyrosyl-[protein] + phosphate. It carries out the reaction a phosphate monoester + H2O = an alcohol + phosphate. Its function is as follows. Catalyzes the dephosphorylation of tyrosine phosphorylated proteins and low-MW aryl phosphates. Can contribute to the regulation of a variety of developmental processes. The polypeptide is Low molecular weight phosphotyrosine protein phosphatase 2 (primo-2) (Drosophila melanogaster (Fruit fly)).